The primary structure comprises 307 residues: Dihydroorotate dehydrogenase B (NAD(+)), catalytic subunit (307 aa).

Residues Ser-22 and 46-47 (KA) each bind FMN. Substrate-binding positions include Lys-46 and 70 to 74 (NAIGL). FMN is bound by residues Asn-102 and Asn-130. Asn-130 serves as a coordination point for substrate. Catalysis depends on Cys-133, which acts as the Nucleophile. FMN is bound by residues Lys-168 and Ile-194. 195-196 (NT) is a substrate binding site. Residues Gly-220, 246 to 247 (GG), and 268 to 269 (GT) each bind FMN.

It belongs to the dihydroorotate dehydrogenase family. Type 1 subfamily. As to quaternary structure, heterotetramer of 2 PyrK and 2 PyrD type B subunits. FMN serves as cofactor.

The protein localises to the cytoplasm. The enzyme catalyses (S)-dihydroorotate + NAD(+) = orotate + NADH + H(+). Its pathway is pyrimidine metabolism; UMP biosynthesis via de novo pathway; orotate from (S)-dihydroorotate (NAD(+) route): step 1/1. Catalyzes the conversion of dihydroorotate to orotate with NAD(+) as electron acceptor. This Latilactobacillus sakei subsp. sakei (strain 23K) (Lactobacillus sakei subsp. sakei) protein is Dihydroorotate dehydrogenase B (NAD(+)), catalytic subunit (pyrD).